Reading from the N-terminus, the 195-residue chain is Peptide deformylase (195 aa).

The Fe cation site is built by C102 and H144. The active site involves E145. H148 serves as a coordination point for Fe cation.

Belongs to the polypeptide deformylase family. Fe(2+) serves as cofactor.

It carries out the reaction N-terminal N-formyl-L-methionyl-[peptide] + H2O = N-terminal L-methionyl-[peptide] + formate. Functionally, removes the formyl group from the N-terminal Met of newly synthesized proteins. Requires at least a dipeptide for an efficient rate of reaction. N-terminal L-methionine is a prerequisite for activity but the enzyme has broad specificity at other positions. This is Peptide deformylase from Salinibacter ruber (strain DSM 13855 / M31).